A 941-amino-acid polypeptide reads, in one-letter code: Bifunctional glutamine synthetase adenylyltransferase/adenylyl-removing enzyme (941 aa).

The interval 1–437 (MSIPTASLSP…TAEFAELLAP (437 aa)) is adenylyl removase. The segment at 444–941 (PDTLADYWRA…FPLGKDEAAL (498 aa)) is adenylyl transferase.

Belongs to the GlnE family. It depends on Mg(2+) as a cofactor.

The enzyme catalyses [glutamine synthetase]-O(4)-(5'-adenylyl)-L-tyrosine + phosphate = [glutamine synthetase]-L-tyrosine + ADP. It catalyses the reaction [glutamine synthetase]-L-tyrosine + ATP = [glutamine synthetase]-O(4)-(5'-adenylyl)-L-tyrosine + diphosphate. In terms of biological role, involved in the regulation of glutamine synthetase GlnA, a key enzyme in the process to assimilate ammonia. When cellular nitrogen levels are high, the C-terminal adenylyl transferase (AT) inactivates GlnA by covalent transfer of an adenylyl group from ATP to specific tyrosine residue of GlnA, thus reducing its activity. Conversely, when nitrogen levels are low, the N-terminal adenylyl removase (AR) activates GlnA by removing the adenylyl group by phosphorolysis, increasing its activity. The regulatory region of GlnE binds the signal transduction protein PII (GlnB) which indicates the nitrogen status of the cell. The protein is Bifunctional glutamine synthetase adenylyltransferase/adenylyl-removing enzyme of Xanthomonas oryzae pv. oryzae (strain MAFF 311018).